Reading from the N-terminus, the 404-residue chain is Cysteine desulfurase IscS (404 aa).

Pyridoxal 5'-phosphate-binding positions include 75–76 (AT), Asn-155, Gln-183, and 203–205 (SAH). Lys-206 carries the N6-(pyridoxal phosphate)lysine modification. Residue Thr-243 participates in pyridoxal 5'-phosphate binding. The Cysteine persulfide intermediate role is filled by Cys-328. Cys-328 is a binding site for [2Fe-2S] cluster.

Belongs to the class-V pyridoxal-phosphate-dependent aminotransferase family. NifS/IscS subfamily. Homodimer. Forms a heterotetramer with IscU, interacts with other sulfur acceptors. Pyridoxal 5'-phosphate is required as a cofactor.

It localises to the cytoplasm. The enzyme catalyses (sulfur carrier)-H + L-cysteine = (sulfur carrier)-SH + L-alanine. Its pathway is cofactor biosynthesis; iron-sulfur cluster biosynthesis. Master enzyme that delivers sulfur to a number of partners involved in Fe-S cluster assembly, tRNA modification or cofactor biosynthesis. Catalyzes the removal of elemental sulfur atoms from cysteine to produce alanine. Functions as a sulfur delivery protein for Fe-S cluster synthesis onto IscU, an Fe-S scaffold assembly protein, as well as other S acceptor proteins. This chain is Cysteine desulfurase IscS, found in Neisseria gonorrhoeae (strain ATCC 700825 / FA 1090).